The primary structure comprises 491 residues: G2/mitotic-specific cyclin-A (491 aa).

The disordered stretch occupies residues 1 to 21 (MASFQIHQDMSNKENPGIKIP). One can recognise a Cyclin N-terminal domain in the interval 206-332 (DILEYFRESE…ILKILSFDLC (127 aa)).

Belongs to the cyclin family. Cyclin AB subfamily. In terms of assembly, component of the Frs-CycA-Cdk1 complex composed of CycA, Cdk1 and Z600. Interacts (via C-terminus) with Z600. Interacts with otu and (via C-terminus) with bam; the interaction stabilizes CycA by negatively regulating its ubiquitination. In terms of processing, ubiquitinated. Ubiquitination state is negatively regulated by a deubiquitinase complex made up of bam and otu.

Functionally, essential for the control of the cell cycle at the G2/M (mitosis) transition. Interacts with the Cdk1 and Cdk2 protein kinases to form MPF. G2/M cyclins accumulate steadily during G2 and are abruptly destroyed at mitosis. The sequence is that of G2/mitotic-specific cyclin-A (CycA) from Drosophila melanogaster (Fruit fly).